A 625-amino-acid chain; its full sequence is Dopamine beta-hydroxylase (625 aa).

The Cytoplasmic portion of the chain corresponds to methionine 1–arginine 9. The chain crosses the membrane as a helical; Signal-anchor for type II membrane protein span at residues glutamate 10–leucine 30. Residues glutamine 31–valine 625 are Intragranular-facing. The 117-residue stretch at glycine 50 to leucine 166 folds into the DOMON domain. Disulfide bonds link cysteine 147–cysteine 604, cysteine 224–cysteine 275, cysteine 261–cysteine 287, cysteine 382–cysteine 495, cysteine 386–cysteine 573, and cysteine 458–cysteine 480. N-linked (GlcNAc...) asparagine glycosylation occurs at asparagine 177. Tyrosine 222 is an active-site residue. Residues histidine 254 and histidine 255 each coordinate Cu(2+). The N-linked (GlcNAc...) asparagine glycan is linked to asparagine 315. Residues histidine 325, histidine 404, histidine 406, and methionine 479 each contribute to the Cu(2+) site. Histidine 404 is an active-site residue. Asparagine 574 carries an N-linked (GlcNAc...) asparagine glycan.

It belongs to the copper type II ascorbate-dependent monooxygenase family. In terms of assembly, homotetramer; composed of two disulfide-linked dimers. It depends on Cu(2+) as a cofactor. Post-translationally, proteolytic cleavage after the membrane-anchor leads to the release of the soluble form. N-glycosylated.

Its subcellular location is the cytoplasmic vesicle. The protein resides in the secretory vesicle lumen. It is found in the secretory vesicle. It localises to the chromaffin granule lumen. The protein localises to the secreted. Its subcellular location is the secretory vesicle membrane. The protein resides in the chromaffin granule membrane. The enzyme catalyses dopamine + 2 L-ascorbate + O2 = (R)-noradrenaline + 2 monodehydro-L-ascorbate radical + H2O. It functions in the pathway catecholamine biosynthesis; (R)-noradrenaline biosynthesis; (R)-noradrenaline from dopamine: step 1/1. Functionally, catalyzes the hydroxylation of dopamine to noradrenaline (also known as norepinephrine), and is thus vital for regulation of these neurotransmitters. The sequence is that of Dopamine beta-hydroxylase (DBH) from Canis lupus familiaris (Dog).